A 360-amino-acid polypeptide reads, in one-letter code: (+)-6a-hydroxymaackiain 3-O-methyltransferase 1 (360 aa).

S-adenosyl-L-methionine contacts are provided by residues 202–205, Asp226, 226–227, 246–247, and Lys260; these read VAGG, DQ, and DM. His264 (proton acceptor) is an active-site residue.

This sequence belongs to the class I-like SAM-binding methyltransferase superfamily. Cation-independent O-methyltransferase family. COMT subfamily.

It carries out the reaction (+)-6a-hydroxymaackiain + S-adenosyl-L-methionine = (+)-pisatin + S-adenosyl-L-homocysteine + H(+). The enzyme catalyses a 4'-hydroxyisoflavone + S-adenosyl-L-methionine = a 4'-methoxyisoflavone + S-adenosyl-L-homocysteine + H(+). Its function is as follows. Methyltransferase involved in the phytoalexin pisatin biosynthesis. Has both 3- and 4'-O-methyltransferase activities. Can use (+)-6a-hydroxymaackiain, 2,7,4'-trihydroxyisoflavanone and with much less activity (+)-medicarpin as substrates, but not (-)-6a-hydroxymaackiain, daidzein, formononetin or isoliquiritigenin. May be involved in formononetin biosynthesis. The polypeptide is (+)-6a-hydroxymaackiain 3-O-methyltransferase 1 (HMM1) (Pisum sativum (Garden pea)).